Reading from the N-terminus, the 179-residue chain is Large ribosomal subunit protein uL5 (179 aa).

This sequence belongs to the universal ribosomal protein uL5 family. As to quaternary structure, part of the 50S ribosomal subunit; part of the 5S rRNA/L5/L18/L25 subcomplex. Contacts the 5S rRNA and the P site tRNA. Forms a bridge to the 30S subunit in the 70S ribosome.

In terms of biological role, this is one of the proteins that bind and probably mediate the attachment of the 5S RNA into the large ribosomal subunit, where it forms part of the central protuberance. In the 70S ribosome it contacts protein S13 of the 30S subunit (bridge B1b), connecting the 2 subunits; this bridge is implicated in subunit movement. Contacts the P site tRNA; the 5S rRNA and some of its associated proteins might help stabilize positioning of ribosome-bound tRNAs. This Agathobacter rectalis (strain ATCC 33656 / DSM 3377 / JCM 17463 / KCTC 5835 / VPI 0990) (Eubacterium rectale) protein is Large ribosomal subunit protein uL5.